The primary structure comprises 252 residues: MSGHSKWANIKHKKAKADAQKGKIFTKLGRELIVAARAGGGDPNNNFRLKIAIDNAKSANMPNDNIQRAIQKGVGGGEGESYEELRYEGYGPGGVAIMVDIMTDNRNRTAGEVRHIFSKHGGNLGETGCVNWMFTEKGQLMILKEDLKCDEDELMLLVLEAGAEDLQQDEESFVVYTAPGDMEAVRQALLDQGIAIEEAKINQVPQNTIEIADLEQAKKLVRMMELLEDHDDSQGVYANFEFADSIDEEELD.

The protein belongs to the TACO1 family.

Its subcellular location is the cytoplasm. This chain is Probable transcriptional regulatory protein DSY2470, found in Desulfitobacterium hafniense (strain Y51).